Consider the following 527-residue polypeptide: ATP synthase subunit alpha (527 aa).

ATP is bound at residue 177-184 (GDRQTGKT).

Belongs to the ATPase alpha/beta chains family. As to quaternary structure, F-type ATPases have 2 components, CF(1) - the catalytic core - and CF(0) - the membrane proton channel. CF(1) has five subunits: alpha(3), beta(3), gamma(1), delta(1), epsilon(1). CF(0) has four main subunits: a(1), b(1), b'(1) and c(9-12).

The protein resides in the cell membrane. It catalyses the reaction ATP + H2O + 4 H(+)(in) = ADP + phosphate + 5 H(+)(out). In terms of biological role, produces ATP from ADP in the presence of a proton gradient across the membrane. The alpha chain is a regulatory subunit. This is ATP synthase subunit alpha from Roseiflexus sp. (strain RS-1).